Consider the following 122-residue polypeptide: uncharacterized protein (122 aa).

Its subcellular location is the mitochondrion. This is an uncharacterized protein from Arabidopsis thaliana (Mouse-ear cress).